Consider the following 561-residue polypeptide: Chaperonin GroEL 1 (561 aa).

ATP is bound by residues 29 to 32, 86 to 90, G413, and D495; these read TMGP and DGTTT.

It belongs to the chaperonin (HSP60) family. Forms a cylinder of 14 subunits composed of two heptameric rings stacked back-to-back. Interacts with the co-chaperonin GroES.

The protein resides in the cytoplasm. It carries out the reaction ATP + H2O + a folded polypeptide = ADP + phosphate + an unfolded polypeptide.. Functionally, together with its co-chaperonin GroES, plays an essential role in assisting protein folding. The GroEL-GroES system forms a nano-cage that allows encapsulation of the non-native substrate proteins and provides a physical environment optimized to promote and accelerate protein folding. This Trichodesmium erythraeum (strain IMS101) protein is Chaperonin GroEL 1.